The sequence spans 400 residues: MGRAKKVVLAYSGGVDTSVCIPYLKQEWGVEEVITLAADLGQGDELEPIREKALKSGASESLVADVKESFIKDYAFPAIQANALYENRYPLGTALARPLIAKILVEAAAKYGADAIAHGCTGKGNDQVRFDVSCTALNPNLKILAPAREWGMSREATIAYGEKFGIPSPVKKSSPYSIDKNLLGRSIEAGALEDPKFEPPEEIYEMTKAIADTPNEPEYIEIGFTQGLPTTLNGIPKDPVALIQELNQVVGSHGVGRIDMIENRLVGIKSREIYESPAMLVLIPAHRDLESLTLTADVSHYKRGIEETYSQIVYNGLWYSPLKAALDAFIQKTQERVSGTVRVKLFKGNATIVGRWSDSSLYTPDLATYGAEDQFDHKAAEGFIYVWGLPTRIWAQQDRG.

Residues 10–18 (AYSGGVDTS) and A38 contribute to the ATP site. Residue Y89 coordinates L-citrulline. G119 is a binding site for ATP. Residues T121, N125, and D126 each coordinate L-aspartate. Residue N125 participates in L-citrulline binding. R129, S177, S186, E262, and Y274 together coordinate L-citrulline.

The protein belongs to the argininosuccinate synthase family. Type 1 subfamily. Homotetramer.

The protein localises to the cytoplasm. It carries out the reaction L-citrulline + L-aspartate + ATP = 2-(N(omega)-L-arginino)succinate + AMP + diphosphate + H(+). Its pathway is amino-acid biosynthesis; L-arginine biosynthesis; L-arginine from L-ornithine and carbamoyl phosphate: step 2/3. This chain is Argininosuccinate synthase, found in Nostoc sp. (strain PCC 7120 / SAG 25.82 / UTEX 2576).